A 243-amino-acid chain; its full sequence is Peptidyl-tRNA hydrolase (243 aa).

Tyr14 is a binding site for tRNA. The Proton acceptor role is filled by His19. TRNA contacts are provided by Phe64, Asn66, and Asn112. Residues 188–243 (GGKAEEEKPRKDNKTTEKKPAGQSHIHQARNHNQPKVLTTGPMADILKKMFGNKGE) are disordered. The span at 190–207 (KAEEEKPRKDNKTTEKKP) shows a compositional bias: basic and acidic residues.

It belongs to the PTH family. Monomer.

Its subcellular location is the cytoplasm. It carries out the reaction an N-acyl-L-alpha-aminoacyl-tRNA + H2O = an N-acyl-L-amino acid + a tRNA + H(+). In terms of biological role, hydrolyzes ribosome-free peptidyl-tRNAs (with 1 or more amino acids incorporated), which drop off the ribosome during protein synthesis, or as a result of ribosome stalling. Functionally, catalyzes the release of premature peptidyl moieties from peptidyl-tRNA molecules trapped in stalled 50S ribosomal subunits, and thus maintains levels of free tRNAs and 50S ribosomes. This Rhizobium leguminosarum bv. trifolii (strain WSM2304) protein is Peptidyl-tRNA hydrolase.